Reading from the N-terminus, the 366-residue chain is UDP-N-acetylglucosamine--N-acetylmuramyl-(pentapeptide) pyrophosphoryl-undecaprenol N-acetylglucosamine transferase (366 aa).

UDP-N-acetyl-alpha-D-glucosamine contacts are provided by residues 17–19 (TGG), N129, R169, S195, I251, 270–275 (ALTVSE), and Q296.

The protein belongs to the glycosyltransferase 28 family. MurG subfamily.

The protein localises to the cell inner membrane. It catalyses the reaction di-trans,octa-cis-undecaprenyl diphospho-N-acetyl-alpha-D-muramoyl-L-alanyl-D-glutamyl-meso-2,6-diaminopimeloyl-D-alanyl-D-alanine + UDP-N-acetyl-alpha-D-glucosamine = di-trans,octa-cis-undecaprenyl diphospho-[N-acetyl-alpha-D-glucosaminyl-(1-&gt;4)]-N-acetyl-alpha-D-muramoyl-L-alanyl-D-glutamyl-meso-2,6-diaminopimeloyl-D-alanyl-D-alanine + UDP + H(+). It functions in the pathway cell wall biogenesis; peptidoglycan biosynthesis. Cell wall formation. Catalyzes the transfer of a GlcNAc subunit on undecaprenyl-pyrophosphoryl-MurNAc-pentapeptide (lipid intermediate I) to form undecaprenyl-pyrophosphoryl-MurNAc-(pentapeptide)GlcNAc (lipid intermediate II). The protein is UDP-N-acetylglucosamine--N-acetylmuramyl-(pentapeptide) pyrophosphoryl-undecaprenol N-acetylglucosamine transferase of Shewanella denitrificans (strain OS217 / ATCC BAA-1090 / DSM 15013).